Consider the following 2103-residue polypeptide: MAPNHVLFFPQERVTFDAVHDLNVRSKSRRRLQSLLAAASNVVQHWTASLDGLERADIGSFEDLVELAERQTTQTRGSIVADLVLLTTVQIGQLLVLAEDDPAILSGHAGARAIPMGFGAGLVAAGVAAAATSADGIVNLGLEAVSVAFRLGVELQRRGKDIEDSNGPWAQVISSATTIADLEQALDRINASLRPINQAYIGEVMTESTVVFGPPSTLDALAKRPELAHATITSPASALAQVPLHGAHLPPISATMIAASSSQQATELWKLAVEEVANKPIDVHQAVTALIHDLHRANITDIVLTAIGASTETSGIQSLLEKNGLAVELGQLSPTPRPYGNDLDSIPADAIAVVGMSGRFPNSDTLDEFWRLLETATTTHQVIPESRFNVDDFYDPTRAKHNALLARYGCFLKNPGDFDHRLFNISPREAMQMDPVQRMLLMTTYEALEMAGYSPPTPAAPGDSEQAPPRIATYFGQTIDDWKSINDQQGIDTHYLPGVNRGFAPGRLSHFFQWAGGFYSIDTGCSSSATALCLARDALTAGKYDAAVVGGGTLLTAPEWFAGLSQGGFLSPTGACKTYSDSADGYCRGEGVGVVILKRLADAVRSKDNVIAVIAGASRNCNAGAGSITYPGEKAQGALYRRVMRQAAVRPEQVDVVEMHGTGTQAGDRVETHAVQSVFAPSNGNQREKPLIVGALKANIGHSEAAAGIISLMKAILILQHDKIPAQPNQPIKMNPYLEPLIGKQIQLANGQSWTRNGAEPRYIFVNNFDAAGGNVSMLLQDPPAFALPAPASGPGLRTHHVVVTSGRTATAHEANRKRLHAYLSAHPDTNLADLAYTTTARRIHNVHREAYVASSTSDLVRQLEKPLADKVESAPPPAVVFTFTGQGAQSLGMGGALYSTSPTFRRLLDSLQSICEVQGLPTKFLNAIRGSGAEGATVTEVDMQVATVALEIALARYWRSLGIRPTVLIGHSLGEYAALCVAGVLSASDALALAFRRATLIFTRCPPSEAAMLAVGLPMRTVQYRIRDSAATTGCEVCCVNGPSSTVVGGPVAAIQALDEYLKSDGKVSTTRLRVQHAFHTRQMDVLLDELEASAAQVPFHAPTLPVASTVLGRIVRPGEQGVFDANYLRRHTREPVAFLDAVRACETEGLIPDRSFAVEIGPHPICISLMATCLQSAKINAWPSLRRGGDDWQSVSSTLAAAHSAQLPVAWSEFHKDHLDTVRLISDLPTYAFDLKTFWHSYKTPAAAVSAASATPSTTGLSRLASTTLHAVEKLQREEGKILGTFTVDLSDPKLAKAICGHVVDESAICPASIFIDMAYTAAVFLEQENGAGAALNTYELSSLEMHSPLVLREDIEVLPQVWVEAVLDIKSNAVSVHFKGQTSKGAVGYGSATMRLGQPDSAVRRDWSRIQSLVRARVQTLNRSVRPREVHAMDTALFYKVFSEIVDYSAPYHAVQEAVIAADFHDAAVTLQLTPTADLGTFTSSPFAVDALVHVAGFLLNADVRRPKNEVHIANHIGSLRIVGDLSSPGPYHVYATIREQDQKAGTSLCDVYTTDSQDRLVAVCSDICFKKLERDFFALLTGATRGRSTKPVAAAPAKSMAKRARQLAPSPSPSSSSGSNTPMSRSPTPSSVSDMVDLGTELLQAVAEQTGVSVAEMKSSPGTTFTEFGVDSQMAISILANFQRTTAVELPAAFFTNFPTPADAEAELGGSALDDLEEDITKPTPSPEQTQARKQGPAPSQHLLSLVAQALGLEASDLTPSTTFDSVGMDSMLSIKITAAFHAKTGIELPAAFFSANPTVGAAQEALDDDAEEESAPAQTSTNPAKETTIDSSRQHKLDAAVSRASYIHLKALPKGRRIYALESPFLEQPELFDLSIEEMATIFLRTIRRIQPHGPYLIGGWSAGSMYAYEVAHRLTREGETIQALIILDMRAPSLIPTSIVTTDFVDKLGTFEGINRARDLPEDLSVKERAHLMATCRALSRYDAPAFPSDRQPKQVAVVWALLGLDNRPDAPIASMGRPGLDIGKSMYEMNLDEFERYFNSWFYGRRQQFGTNGWEDLLGDHIAVYTVNGDHFSMMCPPYASEVGDIVIETVTRAVE.

Residues 17–232 form an N-terminal acylcarrier protein transacylase domain (SAT) region; the sequence is DAVHDLNVRS…KRPELAHATI (216 aa). A Ketosynthase family 3 (KS3) domain is found at 348-782; it reads ADAIAVVGMS…GGNVSMLLQD (435 aa). Catalysis depends on for beta-ketoacyl synthase activity residues Cys-525, His-660, and His-702. The interval 881–1197 is malonyl-CoA:ACP transacylase (MAT) domain; the sequence is VFTFTGQGAQ…RRGGDDWQSV (317 aa). The active-site For acyl/malonyl transferase activity is the Ser-973. Residues 1272-1409 form an N-terminal hotdog fold region; that stretch reads HAVEKLQREE…GQPDSAVRRD (138 aa). One can recognise a PKS/mFAS DH domain in the interval 1272–1582; sequence HAVEKLQREE…FKKLERDFFA (311 aa). Residues 1303–1579 are product template (PT) domain; it reads GHVVDESAIC…DICFKKLERD (277 aa). His-1304 (proton acceptor; for dehydratase activity) is an active-site residue. The tract at residues 1433–1582 is C-terminal hotdog fold; it reads VHAMDTALFY…FKKLERDFFA (150 aa). Asp-1493 functions as the Proton donor; for dehydratase activity in the catalytic mechanism. The segment at 1592 to 1638 is disordered; the sequence is STKPVAAAPAKSMAKRARQLAPSPSPSSSSGSNTPMSRSPTPSSVSD. 2 stretches are compositionally biased toward low complexity: residues 1594-1603 and 1617-1631; these read KPVAAAPAKS and PSSS…SRSP. Carrier domains follow at residues 1640-1716 and 1741-1815; these read VDLG…GGSA and PAPS…DDDA. Ser-1676 bears the O-(pantetheine 4'-phosphoryl)serine mark. Residues 1722-1743 form a disordered region; sequence EDITKPTPSPEQTQARKQGPAP. At Ser-1775 the chain carries O-(pantetheine 4'-phosphoryl)serine. A disordered region spans residues 1809 to 1838; the sequence is EALDDDAEEESAPAQTSTNPAKETTIDSSR. Residues 1810 to 1819 show a composition bias toward acidic residues; the sequence is ALDDDAEEES. The segment covering 1823–1836 has biased composition (polar residues); sequence QTSTNPAKETTIDS. Positions 1849-2082 are thioesterase (TE) domain; it reads ASYIHLKALP…TVNGDHFSMM (234 aa).

The catalysed reaction is 3 malonyl-CoA + acetyl-CoA + 2 H(+) = orsellinate + 3 CO2 + 4 CoA. It participates in secondary metabolite biosynthesis. Its function is as follows. Non-reducing polyketide synthase; part of the gene cluster that mediates the biosynthesis of orsellinic acid, as well as of the cathepsin K inhibitors F9775 A and F9775 B. The non-reducing polyketide synthase orsA produces orsellinic acid by condensing acetyl-CoA with 3 malonyl-CoA units. Further modifications by the decarboxylase orsB and the tyrosinase-like protein orsC lead to the production of F9775 A and F9775 B. The functions of orsD and orsE remain unclear since only orsB and orsC are required to convert orsellinic acid into F9775 A and F9775 B. In Emericella nidulans (strain FGSC A4 / ATCC 38163 / CBS 112.46 / NRRL 194 / M139) (Aspergillus nidulans), this protein is Orsellinic acid synthase.